The sequence spans 149 residues: 3-hydroxyacyl-[acyl-carrier-protein] dehydratase FabZ (149 aa).

The active site involves His-53.

The protein belongs to the thioester dehydratase family. FabZ subfamily.

The protein localises to the cytoplasm. It carries out the reaction a (3R)-hydroxyacyl-[ACP] = a (2E)-enoyl-[ACP] + H2O. Its function is as follows. Involved in unsaturated fatty acids biosynthesis. Catalyzes the dehydration of short chain beta-hydroxyacyl-ACPs and long chain saturated and unsaturated beta-hydroxyacyl-ACPs. The chain is 3-hydroxyacyl-[acyl-carrier-protein] dehydratase FabZ from Neisseria meningitidis serogroup B (strain ATCC BAA-335 / MC58).